Reading from the N-terminus, the 257-residue chain is Aquaporin TIP4-2 (257 aa).

A run of 2 helical transmembrane segments spans residues 32 to 52 (LVLT…AGAG) and 63 to 83 (TLAA…TAGF). Positions 91 to 93 (NPA) match the NPA 1 motif. Helical transmembrane passes span 107 to 127 (LRAL…CILL), 150 to 170 (GLVM…AMIL), and 178 to 198 (TIGP…GGNF). The short motif at 204-206 (NPA) is the NPA 2 element. The helical transmembrane segment at 225-245 (WIGPLLGGSLAGFVYESLFMV) threads the bilayer.

It belongs to the MIP/aquaporin (TC 1.A.8) family. TIP (TC 1.A.8.10) subfamily.

The protein resides in the vacuole membrane. Functionally, aquaporins facilitate the transport of water and small neutral solutes across cell membranes. This is Aquaporin TIP4-2 (TIP4-2) from Zea mays (Maize).